A 163-amino-acid chain; its full sequence is 2-C-methyl-D-erythritol 2,4-cyclodiphosphate synthase (163 aa).

A divalent metal cation contacts are provided by D15 and H17. 4-CDP-2-C-methyl-D-erythritol 2-phosphate contacts are provided by residues 15 to 17 and 41 to 42; these read DFH and HS. Residue H49 coordinates a divalent metal cation. 4-CDP-2-C-methyl-D-erythritol 2-phosphate is bound by residues 63-65 and 139-142; these read DIG and TTNE.

It belongs to the IspF family. In terms of assembly, homotrimer. The cofactor is a divalent metal cation.

The enzyme catalyses 4-CDP-2-C-methyl-D-erythritol 2-phosphate = 2-C-methyl-D-erythritol 2,4-cyclic diphosphate + CMP. It functions in the pathway isoprenoid biosynthesis; isopentenyl diphosphate biosynthesis via DXP pathway; isopentenyl diphosphate from 1-deoxy-D-xylulose 5-phosphate: step 4/6. In terms of biological role, involved in the biosynthesis of isopentenyl diphosphate (IPP) and dimethylallyl diphosphate (DMAPP), two major building blocks of isoprenoid compounds. Catalyzes the conversion of 4-diphosphocytidyl-2-C-methyl-D-erythritol 2-phosphate (CDP-ME2P) to 2-C-methyl-D-erythritol 2,4-cyclodiphosphate (ME-CPP) with a corresponding release of cytidine 5-monophosphate (CMP). The polypeptide is 2-C-methyl-D-erythritol 2,4-cyclodiphosphate synthase (Gloeobacter violaceus (strain ATCC 29082 / PCC 7421)).